Here is a 473-residue protein sequence, read N- to C-terminus: Pup--protein ligase (473 aa).

Mg(2+) is bound at residue glutamate 9. Arginine 54 lines the ATP pocket. A Mg(2+)-binding site is contributed by tyrosine 56. Aspartate 58 functions as the Proton acceptor in the catalytic mechanism. Mg(2+) is bound at residue glutamate 64. Residues threonine 67 and tryptophan 425 each contribute to the ATP site.

The protein belongs to the Pup ligase/Pup deamidase family. Pup-conjugating enzyme subfamily.

It carries out the reaction ATP + [prokaryotic ubiquitin-like protein]-L-glutamate + [protein]-L-lysine = ADP + phosphate + N(6)-([prokaryotic ubiquitin-like protein]-gamma-L-glutamyl)-[protein]-L-lysine.. It functions in the pathway protein degradation; proteasomal Pup-dependent pathway. It participates in protein modification; protein pupylation. Its function is as follows. Catalyzes the covalent attachment of the prokaryotic ubiquitin-like protein modifier Pup to the proteasomal substrate proteins, thereby targeting them for proteasomal degradation. This tagging system is termed pupylation. The ligation reaction involves the side-chain carboxylate of the C-terminal glutamate of Pup and the side-chain amino group of a substrate lysine. The sequence is that of Pup--protein ligase from Brachybacterium faecium (strain ATCC 43885 / DSM 4810 / JCM 11609 / LMG 19847 / NBRC 14762 / NCIMB 9860 / 6-10).